The chain runs to 214 residues: MSEREYFVEMDVRSVEAYELAKEWFDEVVFTKKLILDTEPDWDSLKEELRELRRTYGKVAVLLVTRKPSLIRTFKARNLKALLYVQGGDMRVNRMAIEAKVDALISPWLGRKDYGFDHTLAGMAGRRGVAIGFSLSPLLRANPYERALTLRFMAKVWELVRKYRVPRFITSSAESKWEVRGPRDLMSLGINIGMEIPEARASLNFHPRSLLSRL.

Belongs to the eukaryotic/archaeal RNase P protein component 3 family. In terms of assembly, consists of a catalytic RNA component and at least 4-5 protein subunits.

Its subcellular location is the cytoplasm. It carries out the reaction Endonucleolytic cleavage of RNA, removing 5'-extranucleotides from tRNA precursor.. Part of ribonuclease P, a protein complex that generates mature tRNA molecules by cleaving their 5'-ends. The polypeptide is Ribonuclease P protein component 3 (Thermococcus gammatolerans (strain DSM 15229 / JCM 11827 / EJ3)).